A 251-amino-acid polypeptide reads, in one-letter code: Phosphate import ATP-binding protein PstB (251 aa).

One can recognise an ABC transporter domain in the interval 5 to 246 (FDIRNFSVYY…PEKELTEKYL (242 aa)). 37-44 (GPSGCGKS) is a binding site for ATP.

Belongs to the ABC transporter superfamily. Phosphate importer (TC 3.A.1.7) family. In terms of assembly, the complex is composed of two ATP-binding proteins (PstB), two transmembrane proteins (PstC and PstA) and a solute-binding protein (PstS).

The protein resides in the cell membrane. The enzyme catalyses phosphate(out) + ATP + H2O = ADP + 2 phosphate(in) + H(+). Its function is as follows. Part of the ABC transporter complex PstSACB involved in phosphate import. Responsible for energy coupling to the transport system. This is Phosphate import ATP-binding protein PstB from Archaeoglobus fulgidus (strain ATCC 49558 / DSM 4304 / JCM 9628 / NBRC 100126 / VC-16).